A 455-amino-acid polypeptide reads, in one-letter code: Mitochondrial inner membrane magnesium transporter LPE10 (455 aa).

The N-terminal 56 residues, 1–56, are a transit peptide targeting the mitochondrion; that stretch reads MHIKISTDFAIQNLHCTTMIRPLLRLCGQRTAATPFVSFFRPPKKPLSGISFARHY. Transmembrane regions (helical) follow at residues 365–385 and 396–416; these read FQIG…YGMN and GFLG…AHFL. The short motif at 382–385 is the YGMN element; sequence YGMN. Residues 433–444 are compositionally biased toward basic and acidic residues; sequence KAMKKKDTVAEK. The segment at 433–455 is disordered; the sequence is KAMKKKDTVAEKRRNHLRNWLTK.

It belongs to the CorA metal ion transporter (MIT) (TC 1.A.35) family. In terms of assembly, forms homooligomers. Interacts with MRS2.

It localises to the mitochondrion inner membrane. Its function is as follows. Mitochondrial inner membrane magnesium transporter required for mitochondrial magnesium homeostasis. Modulates the conductance of the MRS2 channel. Involved in the splicing of mRNA group II introns in mitochondria by affecting mitochondrial magnesium concentrations, which are critical for group II intron splicing. This chain is Mitochondrial inner membrane magnesium transporter LPE10 (LPE10), found in Yarrowia lipolytica (strain CLIB 122 / E 150) (Yeast).